A 182-amino-acid polypeptide reads, in one-letter code: ATP-dependent protease subunit HslV (182 aa).

T12 is an active-site residue. 3 residues coordinate Na(+): A167, C170, and T173.

It belongs to the peptidase T1B family. HslV subfamily. In terms of assembly, a double ring-shaped homohexamer of HslV is capped on each side by a ring-shaped HslU homohexamer. The assembly of the HslU/HslV complex is dependent on binding of ATP.

It is found in the cytoplasm. It carries out the reaction ATP-dependent cleavage of peptide bonds with broad specificity.. Its activity is regulated as follows. Allosterically activated by HslU binding. Its function is as follows. Protease subunit of a proteasome-like degradation complex believed to be a general protein degrading machinery. The polypeptide is ATP-dependent protease subunit HslV (Chlorobium luteolum (strain DSM 273 / BCRC 81028 / 2530) (Pelodictyon luteolum)).